A 365-amino-acid chain; its full sequence is Methionine import ATP-binding protein MetN (365 aa).

The 240-residue stretch at 17–256 (IVFEHVTKEF…PQSETTQRFL (240 aa)) folds into the ABC transporter domain. 53 to 60 (GHSGAGKS) is an ATP binding site. The segment at 346-365 (SNSAAPTTSATVPTPTEEAH) is disordered.

It belongs to the ABC transporter superfamily. Methionine importer (TC 3.A.1.24) family. The complex is composed of two ATP-binding proteins (MetN), two transmembrane proteins (MetI) and a solute-binding protein (MetQ).

It is found in the cell membrane. The catalysed reaction is L-methionine(out) + ATP + H2O = L-methionine(in) + ADP + phosphate + H(+). It carries out the reaction D-methionine(out) + ATP + H2O = D-methionine(in) + ADP + phosphate + H(+). Its function is as follows. Part of the ABC transporter complex MetNIQ involved in methionine import. Responsible for energy coupling to the transport system. In Cutibacterium acnes (strain DSM 16379 / KPA171202) (Propionibacterium acnes), this protein is Methionine import ATP-binding protein MetN.